The sequence spans 891 residues: DNA mismatch repair protein MutS (891 aa).

Gly617–Ser624 is an ATP binding site. Residues Arg805 to Lys827 are compositionally biased toward basic and acidic residues. A disordered region spans residues Arg805 to Arg840.

This sequence belongs to the DNA mismatch repair MutS family.

In terms of biological role, this protein is involved in the repair of mismatches in DNA. It is possible that it carries out the mismatch recognition step. This protein has a weak ATPase activity. The protein is DNA mismatch repair protein MutS of Porphyromonas gingivalis (strain ATCC BAA-308 / W83).